A 546-amino-acid chain; its full sequence is Chaperonin GroEL (546 aa).

ATP-binding positions include 29–32 (TLGP), Lys50, 86–90 (DGTTT), Gly414, 477–479 (NAL), and Asp493.

Belongs to the chaperonin (HSP60) family. In terms of assembly, forms a cylinder of 14 subunits composed of two heptameric rings stacked back-to-back. Interacts with the co-chaperonin GroES.

It is found in the cytoplasm. The catalysed reaction is ATP + H2O + a folded polypeptide = ADP + phosphate + an unfolded polypeptide.. Together with its co-chaperonin GroES, plays an essential role in assisting protein folding. The GroEL-GroES system forms a nano-cage that allows encapsulation of the non-native substrate proteins and provides a physical environment optimized to promote and accelerate protein folding. The polypeptide is Chaperonin GroEL (Leptospira interrogans serogroup Icterohaemorrhagiae serovar copenhageni (strain Fiocruz L1-130)).